The primary structure comprises 156 residues: ATP synthase subunit b (156 aa).

The helical transmembrane segment at 13-33 (AFIIFVWFCMKFVWPPLMNAI) threads the bilayer.

Belongs to the ATPase B chain family. F-type ATPases have 2 components, F(1) - the catalytic core - and F(0) - the membrane proton channel. F(1) has five subunits: alpha(3), beta(3), gamma(1), delta(1), epsilon(1). F(0) has three main subunits: a(1), b(2) and c(10-14). The alpha and beta chains form an alternating ring which encloses part of the gamma chain. F(1) is attached to F(0) by a central stalk formed by the gamma and epsilon chains, while a peripheral stalk is formed by the delta and b chains.

The protein resides in the cell inner membrane. F(1)F(0) ATP synthase produces ATP from ADP in the presence of a proton or sodium gradient. F-type ATPases consist of two structural domains, F(1) containing the extramembraneous catalytic core and F(0) containing the membrane proton channel, linked together by a central stalk and a peripheral stalk. During catalysis, ATP synthesis in the catalytic domain of F(1) is coupled via a rotary mechanism of the central stalk subunits to proton translocation. Its function is as follows. Component of the F(0) channel, it forms part of the peripheral stalk, linking F(1) to F(0). The chain is ATP synthase subunit b from Shewanella sediminis (strain HAW-EB3).